A 108-amino-acid chain; its full sequence is MATRLANVPQREAGTILERKEQALKPPAMFKVVLLNDDYTPMEFVVMILQQYFSRDRETATQIMLTVHREGKGVCGIYTRDIAATKVELVSTHARQAGHPLQCVMEEA.

This sequence belongs to the ClpS family. As to quaternary structure, binds to the N-terminal domain of the chaperone ClpA.

In terms of biological role, involved in the modulation of the specificity of the ClpAP-mediated ATP-dependent protein degradation. This chain is ATP-dependent Clp protease adapter protein ClpS, found in Cupriavidus necator (strain ATCC 17699 / DSM 428 / KCTC 22496 / NCIMB 10442 / H16 / Stanier 337) (Ralstonia eutropha).